The sequence spans 486 residues: MSRFIDRVVLHVSAGKGGNGCASVHREKFKPLGGPDGGNGGRGGDVVLEVDGNVHTLLDFHFHPHAKATNGKQGMGSNRDGAQGDDLILRVPDGTVVLDEDGRILADLIGVGTRFEAAQGGRGGLGNAALSSKARKAPGFALLGEDGVERELVLELKSVADVGLVGFPSAGKSSLVSVLSAAKPKIADYPFTTLVPNLGVVSSGDTTFTVADVPGLIPGASDGRGLGLDFLRHLERCAVLAHVVDCATLDPGRDPISDIDALEAELAAYKGALSGDAGLGDLADRPRIVILNKADVPEAAELAEMVTPDLEARGWPVFTISAVSREGLRPLTFALAKLVADYREAHPKAEPKRQVIRPVISNENSFSVVADPEIPGGFIVRGTRPERWVRQTQFDNDEAVGYLADRLARLGVETELVKQGAEPGASVTIGNVSFDWEPQTPAGVDLTRTGRGTDPRLDQVERIGATERKHASRIRRGLEGLDPEDQ.

Residues 2-159 (SRFIDRVVLH…RELVLELKSV (158 aa)) form the Obg domain. The OBG-type G domain occupies 160-340 (ADVGLVGFPS…LTFALAKLVA (181 aa)). GTP is bound by residues 166 to 173 (GFPSAGKS), 191 to 195 (FTTLV), 212 to 215 (DVPG), 292 to 295 (NKAD), and 321 to 323 (SAV). Positions 173 and 193 each coordinate Mg(2+). The region spanning 358–438 (PVISNENSFS…IGNVSFDWEP (81 aa)) is the OCT domain. Residues 462 to 486 (RIGATERKHASRIRRGLEGLDPEDQ) form a disordered region.

Belongs to the TRAFAC class OBG-HflX-like GTPase superfamily. OBG GTPase family. As to quaternary structure, monomer. Requires Mg(2+) as cofactor.

It localises to the cytoplasm. An essential GTPase which binds GTP, GDP and possibly (p)ppGpp with moderate affinity, with high nucleotide exchange rates and a fairly low GTP hydrolysis rate. Plays a role in control of the cell cycle, stress response, ribosome biogenesis and in those bacteria that undergo differentiation, in morphogenesis control. The sequence is that of GTPase Obg from Rhodococcus jostii (strain RHA1).